We begin with the raw amino-acid sequence, 371 residues long: MWNPILLDTSSFSFQKHVSGVFLQVRNATKRAAGSRTSMKDSAGRRLGPKKYEGQDVSTGEIIMRQRGTKFYPGENVGIGKDHSIFALEPGVVRYYLDPFHPKRKFIGVALRRDLKLPSPHFEPTVRRFGRFELTNKRAAYKEENSISRKDYLAKPNILKQLEVRESKRKELQDKLSKVLRDELKLDIKDIELATSYLIRVRASLKNGYPIEDARFNSRYYLKEEERLKARRESWTNEKLSESLSKIDECSDLLNSSTSFNNKLELHQYISEQEKQALKAKLLEDLEKSQHLETKKDKNYIKALFKDACNFLTLSEEVHLRRKYLKSVFPETDSTVETKSGKKSIVSRRFDYTKNKVEVIARSRRAFLSKL.

The N-terminal 27 residues, 1–27 (MWNPILLDTSSFSFQKHVSGVFLQVRN), are a transit peptide targeting the mitochondrion.

It belongs to the bacterial ribosomal protein bL27 family. Component of the mitochondrial large ribosomal subunit (mt-LSU). Mature yeast 74S mitochondrial ribosomes consist of a small (37S) and a large (54S) subunit. The 37S small subunit contains a 15S ribosomal RNA (15S mt-rRNA) and 34 different proteins. The 54S large subunit contains a 21S rRNA (21S mt-rRNA) and 46 different proteins.

The protein localises to the mitochondrion. In terms of biological role, component of the mitochondrial ribosome (mitoribosome), a dedicated translation machinery responsible for the synthesis of mitochondrial genome-encoded proteins, including at least some of the essential transmembrane subunits of the mitochondrial respiratory chain. The mitoribosomes are attached to the mitochondrial inner membrane and translation products are cotranslationally integrated into the membrane. This Saccharomyces cerevisiae (strain ATCC 204508 / S288c) (Baker's yeast) protein is Large ribosomal subunit protein bL27m (MRP7).